The sequence spans 209 residues: Ribosomal RNA large subunit methyltransferase E (209 aa).

The S-adenosyl-L-methionine site is built by G63, W65, D83, D99, and D124. The active-site Proton acceptor is the K164.

It belongs to the class I-like SAM-binding methyltransferase superfamily. RNA methyltransferase RlmE family.

The protein localises to the cytoplasm. It carries out the reaction uridine(2552) in 23S rRNA + S-adenosyl-L-methionine = 2'-O-methyluridine(2552) in 23S rRNA + S-adenosyl-L-homocysteine + H(+). In terms of biological role, specifically methylates the uridine in position 2552 of 23S rRNA at the 2'-O position of the ribose in the fully assembled 50S ribosomal subunit. The sequence is that of Ribosomal RNA large subunit methyltransferase E from Vibrio parahaemolyticus serotype O3:K6 (strain RIMD 2210633).